Reading from the N-terminus, the 375-residue chain is Myb family transcription factor PHL5 (375 aa).

Residues 159-171 (TSSQHQPKQSHPR) show a composition bias toward polar residues. Positions 159–178 (TSSQHQPKQSHPRFSSPPSF) are disordered. Residues 189–249 (CVNKTRIRWT…HLQKYRIAKY (61 aa)) enclose the HTH myb-type domain. The segment at residues 220–245 (PKAILKRMDSDGLTIFHVKSHLQKYR) is a DNA-binding region (H-T-H motif). The stretch at 279 to 299 (KEALQLQLDVQRHLHEQLEIQ) forms a coiled coil. Positions 292 to 297 (LHEQLE) match the LHEQLE motif.

The protein belongs to the MYB-CC family.

The protein localises to the nucleus. The chain is Myb family transcription factor PHL5 from Arabidopsis thaliana (Mouse-ear cress).